The primary structure comprises 284 residues: RNA polymerase sigma factor RpoH (284 aa).

The tract at residues 53–122 is sigma-70 factor domain-2; it reads LILSHLRFVV…IHEYVLRNWR (70 aa). The Interaction with polymerase core subunit RpoC motif lies at 77-80; the sequence is DLIQ. The segment at 228-280 is sigma-70 factor domain-4; the sequence is AMQGLDERSQDIIRARWLDEDNKSTLQELADRYGVSAERVRQLEKNAMKKLRA. The H-T-H motif DNA-binding region spans 253-272; it reads LQELADRYGVSAERVRQLEK.

This sequence belongs to the sigma-70 factor family. RpoH subfamily. In terms of assembly, interacts with the RNA polymerase core enzyme.

Its subcellular location is the cytoplasm. Sigma factors are initiation factors that promote the attachment of RNA polymerase to specific initiation sites and are then released. This sigma factor is involved in regulation of expression of heat shock genes. The protein is RNA polymerase sigma factor RpoH of Escherichia coli O6:H1 (strain CFT073 / ATCC 700928 / UPEC).